The sequence spans 199 residues: MIGRLRGILLEKRAPFLLLDVQGVGYELEAPLSTFYVLPAMGAEVILYTHLVVRDDAHLLYAFASEKERGLFRSLIRVNGVGAKLGLGILSGIEAESFTRCVQEGDTVSLTRLPGVGKKTAERLIVEMRDRLLDMPESGVAGMRPDRVDGSAPGTVAEAVSALVALGYKPNEASRAVRRLDTEALTTEEIIRQALQRML.

A domain I region spans residues 1-64 (MIGRLRGILL…DDAHLLYAFA (64 aa)). The segment at 65-143 (SEKERGLFRS…DMPESGVAGM (79 aa)) is domain II. The segment at 144–150 (RPDRVDG) is flexible linker. Residues 151–199 (SAPGTVAEAVSALVALGYKPNEASRAVRRLDTEALTTEEIIRQALQRML) form a domain III region.

This sequence belongs to the RuvA family. In terms of assembly, homotetramer. Forms an RuvA(8)-RuvB(12)-Holliday junction (HJ) complex. HJ DNA is sandwiched between 2 RuvA tetramers; dsDNA enters through RuvA and exits via RuvB. An RuvB hexamer assembles on each DNA strand where it exits the tetramer. Each RuvB hexamer is contacted by two RuvA subunits (via domain III) on 2 adjacent RuvB subunits; this complex drives branch migration. In the full resolvosome a probable DNA-RuvA(4)-RuvB(12)-RuvC(2) complex forms which resolves the HJ.

It is found in the cytoplasm. Functionally, the RuvA-RuvB-RuvC complex processes Holliday junction (HJ) DNA during genetic recombination and DNA repair, while the RuvA-RuvB complex plays an important role in the rescue of blocked DNA replication forks via replication fork reversal (RFR). RuvA specifically binds to HJ cruciform DNA, conferring on it an open structure. The RuvB hexamer acts as an ATP-dependent pump, pulling dsDNA into and through the RuvAB complex. HJ branch migration allows RuvC to scan DNA until it finds its consensus sequence, where it cleaves and resolves the cruciform DNA. This Nitrosococcus oceani (strain ATCC 19707 / BCRC 17464 / JCM 30415 / NCIMB 11848 / C-107) protein is Holliday junction branch migration complex subunit RuvA.